The sequence spans 176 residues: Gamma-crystallin M2 (176 aa).

2 Beta/gamma crystallin 'Greek key' domains span residues 2-40 (GKVI…RVEG) and 41-83 (GCWV…RIIP). The tract at residues 84 to 88 (QYRGS) is connecting peptide. Beta/gamma crystallin 'Greek key' domains follow at residues 89–129 (YRMR…HVMD) and 130–172 (GYWI…RRIM).

Belongs to the beta/gamma-crystallin family. In terms of assembly, monomer.

Functionally, crystallins are the dominant structural components of the vertebrate eye lens. This Chiloscyllium indicum (Slender bamboo shark) protein is Gamma-crystallin M2 (GM2).